Here is a 453-residue protein sequence, read N- to C-terminus: 3-phosphoshikimate 1-carboxyvinyltransferase (453 aa).

Residues 1 to 25 (MSHDSEPQPVTAHPAGPLTGALKPP) form a disordered region. 3-phosphoshikimate-binding residues include Lys28, Ser29, and Arg33. Residue Lys28 participates in phosphoenolpyruvate binding. Residues Gly101 and Arg129 each coordinate phosphoenolpyruvate. Residues Ser175, Gln177, Asp330, and Lys357 each contribute to the 3-phosphoshikimate site. Gln177 is a phosphoenolpyruvate binding site. The active-site Proton acceptor is the Asp330. 2 residues coordinate phosphoenolpyruvate: Arg361 and Arg405.

This sequence belongs to the EPSP synthase family. Monomer.

The protein resides in the cytoplasm. The enzyme catalyses 3-phosphoshikimate + phosphoenolpyruvate = 5-O-(1-carboxyvinyl)-3-phosphoshikimate + phosphate. Its pathway is metabolic intermediate biosynthesis; chorismate biosynthesis; chorismate from D-erythrose 4-phosphate and phosphoenolpyruvate: step 6/7. Catalyzes the transfer of the enolpyruvyl moiety of phosphoenolpyruvate (PEP) to the 5-hydroxyl of shikimate-3-phosphate (S3P) to produce enolpyruvyl shikimate-3-phosphate and inorganic phosphate. The protein is 3-phosphoshikimate 1-carboxyvinyltransferase of Methylorubrum populi (strain ATCC BAA-705 / NCIMB 13946 / BJ001) (Methylobacterium populi).